We begin with the raw amino-acid sequence, 637 residues long: tRNA uridine 5-carboxymethylaminomethyl modification enzyme MnmG (637 aa).

FAD contacts are provided by residues 15–20, I127, and S182; that span reads GAGHAG. 276–290 contacts NAD(+); that stretch reads GPRYCPSIEDKIVRF. Residue Q373 participates in FAD binding.

It belongs to the MnmG family. In terms of assembly, homodimer. Heterotetramer of two MnmE and two MnmG subunits. Requires FAD as cofactor.

It localises to the cytoplasm. NAD-binding protein involved in the addition of a carboxymethylaminomethyl (cmnm) group at the wobble position (U34) of certain tRNAs, forming tRNA-cmnm(5)s(2)U34. In Streptococcus pneumoniae (strain Hungary19A-6), this protein is tRNA uridine 5-carboxymethylaminomethyl modification enzyme MnmG.